We begin with the raw amino-acid sequence, 689 residues long: Glycine--tRNA ligase beta subunit (689 aa).

The protein belongs to the class-II aminoacyl-tRNA synthetase family. As to quaternary structure, tetramer of two alpha and two beta subunits.

It is found in the cytoplasm. The catalysed reaction is tRNA(Gly) + glycine + ATP = glycyl-tRNA(Gly) + AMP + diphosphate. The polypeptide is Glycine--tRNA ligase beta subunit (Acinetobacter baumannii (strain AB307-0294)).